The chain runs to 183 residues: ATP synthase subunit b, chloroplastic (183 aa).

Residues Asp25 to Gly45 traverse the membrane as a helical segment.

This sequence belongs to the ATPase B chain family. F-type ATPases have 2 components, F(1) - the catalytic core - and F(0) - the membrane proton channel. F(1) has five subunits: alpha(3), beta(3), gamma(1), delta(1), epsilon(1). F(0) has four main subunits: a(1), b(1), b'(1) and c(10-14). The alpha and beta chains form an alternating ring which encloses part of the gamma chain. F(1) is attached to F(0) by a central stalk formed by the gamma and epsilon chains, while a peripheral stalk is formed by the delta, b and b' chains.

The protein localises to the plastid. It is found in the chloroplast thylakoid membrane. In terms of biological role, f(1)F(0) ATP synthase produces ATP from ADP in the presence of a proton or sodium gradient. F-type ATPases consist of two structural domains, F(1) containing the extramembraneous catalytic core and F(0) containing the membrane proton channel, linked together by a central stalk and a peripheral stalk. During catalysis, ATP synthesis in the catalytic domain of F(1) is coupled via a rotary mechanism of the central stalk subunits to proton translocation. Its function is as follows. Component of the F(0) channel, it forms part of the peripheral stalk, linking F(1) to F(0). The sequence is that of ATP synthase subunit b, chloroplastic from Sorghum bicolor (Sorghum).